The primary structure comprises 304 residues: N-acetyl-D-glucosamine kinase (304 aa).

Residues 4–11 (GFDIGGTK) and 133–140 (GFGGGLIF) each bind ATP. Zn(2+) is bound by residues His-157, Cys-178, Cys-180, and Cys-185.

It belongs to the ROK (NagC/XylR) family. NagK subfamily.

It catalyses the reaction N-acetyl-D-glucosamine + ATP = N-acetyl-D-glucosamine 6-phosphate + ADP + H(+). The protein operates within cell wall biogenesis; peptidoglycan recycling. Catalyzes the phosphorylation of N-acetyl-D-glucosamine (GlcNAc) derived from cell-wall degradation, yielding GlcNAc-6-P. The protein is N-acetyl-D-glucosamine kinase of Pasteurella multocida (strain Pm70).